Here is a 474-residue protein sequence, read N- to C-terminus: Glutamine synthetase (474 aa).

Residues 14–99 (EKIELIDLKF…VCSIKEPRTG (86 aa)) form the GS beta-grasp domain. In terms of domain architecture, GS catalytic spans 106–474 (PRVIAQKAID…PYEFSIYYDV (369 aa)). Residues glutamate 131 and glutamate 133 each coordinate Mg(2+). Glutamate 211 lines the ATP pocket. Residues glutamate 216 and glutamate 224 each contribute to the Mg(2+) site. L-glutamate is bound by residues 268 to 269 (NG) and glycine 269. Histidine 273 contacts Mg(2+). ATP-binding positions include 275–277 (HQS) and serine 277. Positions 325, 331, and 343 each coordinate L-glutamate. ATP-binding residues include arginine 343, arginine 348, and lysine 357. Residue glutamate 362 participates in Mg(2+) binding. L-glutamate is bound at residue arginine 364. O-AMP-tyrosine is present on tyrosine 402.

The protein belongs to the glutamine synthetase family. In terms of assembly, oligomer of 12 subunits arranged in the form of two hexagons. The cofactor is Mg(2+).

It is found in the cytoplasm. The enzyme catalyses L-glutamate + NH4(+) + ATP = L-glutamine + ADP + phosphate + H(+). With respect to regulation, the activity of this enzyme could be controlled by adenylation under conditions of abundant glutamine. Functionally, involved in nitrogen metabolism via ammonium assimilation. Catalyzes the ATP-dependent biosynthesis of glutamine from glutamate and ammonia. The polypeptide is Glutamine synthetase (Nostoc sp. (strain PCC 7120 / SAG 25.82 / UTEX 2576)).